The primary structure comprises 227 residues: YEATS domain-containing protein 4 (227 aa).

A YEATS domain is found at 15-158 (RVKGVTIVKP…AMMQQLLTTS (144 aa)). K37 is covalently cross-linked (Glycyl lysine isopeptide (Lys-Gly) (interchain with G-Cter in SUMO2)). The diacetylated histone H3 binding stretch occupies residues 93–97 (WGEFE). The interaction with MLLT10 stretch occupies residues 163–227 (LGAYKHETEF…LEEDDQAKDI (65 aa)). The interval 168–227 (HETEFAELEVKTREKLEAAKKKTSFEIAELKERLKASRETINCLKNEIRKLEEDDQAKDI) is interaction with TACC1. The stretch at 178–226 (KTREKLEAAKKKTSFEIAELKERLKASRETINCLKNEIRKLEEDDQAKD) forms a coiled coil.

As to quaternary structure, component of numerous complexes with chromatin remodeling and histone acetyltransferase activity. Component of the NuA4 histone acetyltransferase complex which contains the catalytic subunit KAT5/TIP60 and the subunits EP400, TRRAP/PAF400, BRD8/SMAP, EPC1, DMAP1/DNMAP1, RUVBL1/TIP49, RUVBL2, ING3, actin, ACTL6A/BAF53A, MORF4L1/MRG15, MORF4L2/MRGX, MRGBP, YEATS4/GAS41, VPS72/YL1 and MEAF6. The NuA4 complex interacts with MYC and the adenovirus E1A protein. Component of a NuA4-related complex which contains EP400, TRRAP/PAF400, SRCAP, BRD8/SMAP, EPC1, DMAP1/DNMAP1, RUVBL1/TIP49, RUVBL2, actin, ACTL6A/BAF53A, VPS72 and YEATS4/GAS41. Interacts with MLLT10/AF10. Also interacts with the SWI/SNF component SMARCB1/BAF47, TACC1 and TACC2, and the nuclear matrix protein NUMA1. As to expression, expressed in brain, heart, kidney, liver, lung, pancreas, placenta and skeletal muscle.

The protein resides in the nucleus. Its function is as follows. Chromatin reader component of the NuA4 histone acetyltransferase (HAT) complex, a complex involved in transcriptional activation of select genes principally by acetylation of nucleosomal histones H4 and H2A. Specifically recognizes and binds acylated histone H3, with a preference for histone H3 diacetylated at 'Lys-18' and 'Lys-27' (H3K18ac and H3K27ac) or histone H3 diacetylated at 'Lys-14' and 'Lys-27' (H3K14ac and H3K27ac). Also able to recognize and bind crotonylated histone H3. May also recognize and bind histone H3 succinylated at 'Lys-122' (H3K122succ); additional evidences are however required to confirm this result in vivo. Plays a key role in histone variant H2AZ1/H2A.Z deposition into specific chromatin regions: recognizes and binds H3K14ac and H3K27ac on the promoters of actively transcribed genes and recruits NuA4-related complex to deposit H2AZ1/H2A.Z. H2AZ1/H2A.Z deposition is required for maintenance of embryonic stem cell. The polypeptide is YEATS domain-containing protein 4 (Homo sapiens (Human)).